The chain runs to 295 residues: MMRILLFLATNLAVVLIASITLSLFGFNGFMAANGVDLNLNQLLVFCAVFGFAGSLFSLFISKWMAKMSTGTQIISQPRTRHEQWLLQTVEQLSRDAGIKMPEVGIFPAYEANAFATGWNKNDALVAVSHGLLERFSPDEVKAVLAHEIGHVANGDMVTLALVQGVVNTFVMFFARIIGNFVDKVIFKSENGQGIAYYITTIFAELVLGFLASAIVMWFSRKREFRADDAGARLAGTDAMIGALQRLRSEQGVPVNMPDSLTAFGINAGLKKGLAGLFMSHPPLEQRIEALRRRG.

2 helical membrane-spanning segments follow: residues Ile-4 to Leu-24 and Gln-42 to Ser-62. Residue His-147 coordinates Zn(2+). The active site involves Glu-148. His-151 is a binding site for Zn(2+). Transmembrane regions (helical) follow at residues Val-158–Ile-178 and Ile-199–Phe-219. Glu-224 is a binding site for Zn(2+).

It belongs to the peptidase M48B family. The cofactor is Zn(2+).

It localises to the cell inner membrane. The sequence is that of Protease HtpX from Pseudomonas savastanoi pv. phaseolicola (strain 1448A / Race 6) (Pseudomonas syringae pv. phaseolicola (strain 1448A / Race 6)).